Here is a 460-residue protein sequence, read N- to C-terminus: Mitochondrial distribution and morphology protein 10 (460 aa).

It belongs to the MDM10 family. In terms of assembly, component of the ER-mitochondria encounter structure (ERMES) or MDM complex, composed of MMM1, MDM10, MDM12 and MDM34. Associates with the mitochondrial outer membrane sorting assembly machinery SAM(core) complex.

It localises to the mitochondrion outer membrane. Its function is as follows. Component of the ERMES/MDM complex, which serves as a molecular tether to connect the endoplasmic reticulum and mitochondria. Components of this complex are involved in the control of mitochondrial shape and protein biogenesis and may function in phospholipid exchange. MDM10 is involved in the late assembly steps of the general translocase of the mitochondrial outer membrane (TOM complex). Functions in the TOM40-specific route of the assembly of outer membrane beta-barrel proteins, including the association of TOM40 with the receptor TOM22 and small TOM proteins. Can associate with the SAM(core) complex as well as the MDM12-MMM1 complex, both involved in late steps of the major beta-barrel assembly pathway, that is responsible for biogenesis of all outer membrane beta-barrel proteins. May act as a switch that shuttles between both complexes and channels precursor proteins into the TOM40-specific pathway. Plays a role in mitochondrial morphology and in the inheritance of mitochondria. In Candida glabrata (strain ATCC 2001 / BCRC 20586 / JCM 3761 / NBRC 0622 / NRRL Y-65 / CBS 138) (Yeast), this protein is Mitochondrial distribution and morphology protein 10.